Here is a 141-residue protein sequence, read N- to C-terminus: Lutropin subunit beta (141 aa).

The N-terminal stretch at 1 to 20 (MEMLQGLLLWLLLNVGGVWA) is a signal peptide. 6 cysteine pairs are disulfide-bonded: Cys29–Cys77, Cys43–Cys92, Cys46–Cys130, Cys54–Cys108, Cys58–Cys110, and Cys113–Cys120. Asn33 carries an N-linked (GlcNAc...) asparagine glycan.

It belongs to the glycoprotein hormones subunit beta family. In terms of assembly, heterodimer of a common alpha chain and a unique beta chain which confers biological specificity to thyrotropin, lutropin, follitropin and gonadotropin.

It is found in the secreted. In terms of biological role, promotes spermatogenesis and ovulation by stimulating the testes and ovaries to synthesize steroids. The polypeptide is Lutropin subunit beta (LHB) (Ailurus fulgens (Himalayan red panda)).